A 937-amino-acid polypeptide reads, in one-letter code: Isoleucine--tRNA ligase (937 aa).

A 'HIGH' region motif is present at residues 57-67; it reads PYANGPIHMGH. Residue glutamate 556 coordinates L-isoleucyl-5'-AMP. Positions 597–601 match the 'KMSKS' region motif; it reads KMSKS. Residue lysine 600 coordinates ATP. Residues cysteine 895, cysteine 898, cysteine 915, and cysteine 918 each coordinate Zn(2+).

It belongs to the class-I aminoacyl-tRNA synthetase family. IleS type 1 subfamily. Monomer. The cofactor is Zn(2+).

The protein resides in the cytoplasm. The enzyme catalyses tRNA(Ile) + L-isoleucine + ATP = L-isoleucyl-tRNA(Ile) + AMP + diphosphate. In terms of biological role, catalyzes the attachment of isoleucine to tRNA(Ile). As IleRS can inadvertently accommodate and process structurally similar amino acids such as valine, to avoid such errors it has two additional distinct tRNA(Ile)-dependent editing activities. One activity is designated as 'pretransfer' editing and involves the hydrolysis of activated Val-AMP. The other activity is designated 'posttransfer' editing and involves deacylation of mischarged Val-tRNA(Ile). This is Isoleucine--tRNA ligase from Levilactobacillus brevis (strain ATCC 367 / BCRC 12310 / CIP 105137 / JCM 1170 / LMG 11437 / NCIMB 947 / NCTC 947) (Lactobacillus brevis).